The sequence spans 1687 residues: Muscle calcium channel subunit alpha-1 (1687 aa).

The disordered stretch occupies residues 1–33 (MDDAVCPTETDNVQNKQKATTPKRTQRRGGKQQ). The Cytoplasmic segment spans residues 1–61 (MDDAVCPTET…IFCIKIVDSK (61 aa)). The segment covering 9-23 (ETDNVQNKQKATTPK) has biased composition (polar residues). An I repeat occupies 48 to 330 (NPLRIFCIKI…LILGVLSGEF (283 aa)). The chain crosses the membrane as a helical span at residues 62 to 80 (LFEYFILLTIFANCVALAV). Residues 81-99 (YTPYPSGDSNITNQMLEKI) are Extracellular-facing. N-linked (GlcNAc...) asparagine glycosylation occurs at asparagine 90. The helical transmembrane segment at 100–117 (EYIFLVIFTSECVMKIIA) threads the bilayer. At 118–130 (YGFVLHTGSYLRN) the chain is on the cytoplasmic side. A helical membrane pass occupies residues 131-145 (GWNFLDFFIVVIGMI). Residues 146 to 157 (STALSNLVKEGF) lie on the Extracellular side of the membrane. A helical membrane pass occupies residues 158–176 (DVKALRAFRVLRPLRLVSG). The Cytoplasmic portion of the chain corresponds to 177 to 196 (VPSLQVVLNSILKAMIPLLH). The chain crosses the membrane as a helical span at residues 197–216 (IALLVLFVIIIYAIIGLELF). The Extracellular segment spans residues 217–302 (SGKLHKTCRH…SIQDAMGSSW (86 aa)). Glutamate 285 is a binding site for Ca(2+). A helical membrane pass occupies residues 303-327 (EWIYFVSMVILGAFFVMNLILGVLS). Residues 328 to 434 (GEFSKERTKA…RACRKAVKSQ (107 aa)) lie on the Cytoplasmic side of the membrane. One copy of the II repeat lies at 420–667 (NRRIRRACRK…VFLAIAVDNL (248 aa)). A helical membrane pass occupies residues 435 to 454 (AFYWLIILLVFLNTGVLATE). Over 455–467 (HYRQPIWLDQFQE) the chain is Extracellular. Residues 468-487 (YTNIFFIALFTCEMILKMYS) form a helical membrane-spanning segment. At 488–496 (LGFQGYFVS) the chain is on the cytoplasmic side. Residues 497 to 515 (LFNRFDCFVVIGSISEMVL) traverse the membrane as a helical segment. At 516 to 525 (TSSELMAPLG) the chain is on the extracellular side. Residues 526–544 (VSVLRCVRLLRVFKVTKYW) traverse the membrane as a helical segment. Residues 545-563 (HSLSNLVASLLNSIQSIAS) are Cytoplasmic-facing. The chain crosses the membrane as a helical span at residues 564–583 (LLLLLFLFIVIFGLLGMQVF). Topologically, residues 584–639 (GGRFTFKPEEEKPRSNFDSFYQSLLTVFQILTGEDWNVVMYDGIRAYGGVFSFGIV) are extracellular. Glutamate 617 serves as a coordination point for Ca(2+). The helical transmembrane segment at 640–664 (ACIYYIILFICGNYILLNVFLAIAV) threads the bilayer. The Cytoplasmic segment spans residues 665–785 (DNLADADSLS…TNRFRIFCHR (121 aa)). One copy of the III repeat lies at 777–1059 (NRFRIFCHRL…IFVGFVIVTF (283 aa)). The helical transmembrane segment at 786–809 (LCNHSNFGNFILCCIMFSSAMLAA) threads the bilayer. Residues 810-826 (ENPLKADASRNIVLNKF) lie on the Extracellular side of the membrane. Residues 827–846 (DYFFTAVFTIELVLKLISYG) traverse the membrane as a helical segment. The Cytoplasmic segment spans residues 847–854 (FVLHDGAF). The helical transmembrane segment at 855–877 (CRSAFNLLDLLVVCVSLISIFFN) threads the bilayer. Topologically, residues 878–885 (SNAISVVK) are extracellular. A helical transmembrane segment spans residues 886–900 (ILRVLRVLRPLRAIN). The Cytoplasmic segment spans residues 901–921 (RAKGLKHVVQCVIVAVKTIGN). The helical transmembrane segment at 922-941 (IVLVTCLLQFMFAVIGVQLF) threads the bilayer. Residues 942 to 1030 (KGKFFSCSDG…NGGPIYNFRP (89 aa)) lie on the Extracellular side of the membrane. The segment at 979-1068 (REWKNNKFHF…FQNEGEQEYK (90 aa)) is dihydropyridine binding. Glutamate 1005 contacts Ca(2+). A helical transmembrane segment spans residues 1031 to 1055 (IVAAYYIIYIIIIAFFMVNIFVGFV). Residues 1056-1110 (IVTFQNEGEQEYKNCELDKNQRNCIEFALKAKPVRRYIPKHSIQYKVWWFVTSSS) lie on the Cytoplasmic side of the membrane. The IV repeat unit spans residues 1096–1370 (HSIQYKVWWF…LFVAVIMDNF (275 aa)). The helical transmembrane segment at 1111–1129 (FEYSIFVLIMINTVTLAMK) threads the bilayer. Topologically, residues 1130-1143 (FYKQPEYYSEILDA) are extracellular. Residues 1144–1163 (LNMIFTAVFSLEFIFKLAAF) form a helical membrane-spanning segment. The Cytoplasmic portion of the chain corresponds to 1164-1172 (RFKNYFGDA). A helical transmembrane segment spans residues 1173-1191 (WNTFDFIIVLGSFIDIVYS). At 1192–1219 (EIKTKEQALATCDGQSCNKAKGGSTLIS) the chain is on the extracellular side. The chain crosses the membrane as a helical span at residues 1220–1238 (INFFRLFRVMRLVKLLSKG). Residues 1239–1257 (EGIRTLLWTFIKSFQALPY) lie on the Cytoplasmic side of the membrane. A helical transmembrane segment spans residues 1258-1277 (VALLIVMLFFIYAVIGMQVF). At 1278–1343 (GKIMLEEGTS…AVNNCGSSIA (66 aa)) the chain is on the extracellular side. The tract at residues 1327-1389 (KCDPESDAVN…LGPHHLDEFI (63 aa)) is dihydropyridine binding. Residues 1337–1378 (NCGSSIAFPYFISFYVLCSFLIINLFVAVIMDNFDYLTRDWS) are phenylalkylamine binding. A helical membrane pass occupies residues 1344 to 1362 (FPYFISFYVLCSFLIINLF). At 1363-1687 (VAVIMDNFDY…PKSKDKDEEF (325 aa)) the chain is on the cytoplasmic side.

This sequence belongs to the calcium channel alpha-1 subunit (TC 1.A.1.11) family. In terms of tissue distribution, predominantly expressed in the larval body wall musculature. In adults, highest expression in thorax followed by head and at a lower extent by abdomen.

The protein localises to the membrane. Voltage-sensitive calcium channels (VSCC) mediate the entry of calcium ions into excitable cells and are also involved in a variety of calcium-dependent processes, including muscle contraction, hormone or neurotransmitter release, gene expression, cell motility, cell division and cell death. MDL-alpha1 encodes a dihydropyridine- and diltiazem-sensitive current in larval body wall muscle. The sequence is that of Muscle calcium channel subunit alpha-1 from Musca domestica (House fly).